A 484-amino-acid polypeptide reads, in one-letter code: tRNA sulfurtransferase (484 aa).

One can recognise a THUMP domain in the interval Arg63 to Gln167. Residues Leu185 to Met186, Lys267, Gly289, and Gln298 each bind ATP. A disulfide bond links Cys346 and Cys457. One can recognise a Rhodanese domain in the interval Val405 to Pro483. Cys457 serves as the catalytic Cysteine persulfide intermediate.

It belongs to the ThiI family.

It localises to the cytoplasm. The catalysed reaction is [ThiI sulfur-carrier protein]-S-sulfanyl-L-cysteine + a uridine in tRNA + 2 reduced [2Fe-2S]-[ferredoxin] + ATP + H(+) = [ThiI sulfur-carrier protein]-L-cysteine + a 4-thiouridine in tRNA + 2 oxidized [2Fe-2S]-[ferredoxin] + AMP + diphosphate. The enzyme catalyses [ThiS sulfur-carrier protein]-C-terminal Gly-Gly-AMP + S-sulfanyl-L-cysteinyl-[cysteine desulfurase] + AH2 = [ThiS sulfur-carrier protein]-C-terminal-Gly-aminoethanethioate + L-cysteinyl-[cysteine desulfurase] + A + AMP + 2 H(+). The protein operates within cofactor biosynthesis; thiamine diphosphate biosynthesis. Catalyzes the ATP-dependent transfer of a sulfur to tRNA to produce 4-thiouridine in position 8 of tRNAs, which functions as a near-UV photosensor. Also catalyzes the transfer of sulfur to the sulfur carrier protein ThiS, forming ThiS-thiocarboxylate. This is a step in the synthesis of thiazole, in the thiamine biosynthesis pathway. The sulfur is donated as persulfide by IscS. The chain is tRNA sulfurtransferase from Pseudomonas paraeruginosa (strain DSM 24068 / PA7) (Pseudomonas aeruginosa (strain PA7)).